Consider the following 398-residue polypeptide: Lysophospholipid transporter LplT (398 aa).

The next 12 membrane-spanning stretches (helical) occupy residues 19–39, 53–73, 96–116, 139–159, 164–184, 195–213, 227–247, 257–277, 281–301, 304–324, 352–372, and 373–393; these read VIVA…ATLA, VLQM…GQIA, ICLG…AAAY, LMEA…GVLA, IAAL…NLFI, SWQL…VVLW, LFWG…PVAL, YLNA…AKLV, TVSR…MFSL, ALLP…FFVV, NSTM…GVPA, and VATG…LWIW.

Belongs to the major facilitator superfamily. LplT (TC 2.A.1.42) family.

Its subcellular location is the cell inner membrane. Functionally, catalyzes the facilitated diffusion of 2-acyl-glycero-3-phosphoethanolamine (2-acyl-GPE) into the cell. The sequence is that of Lysophospholipid transporter LplT from Salmonella arizonae (strain ATCC BAA-731 / CDC346-86 / RSK2980).